A 400-amino-acid chain; its full sequence is Lipid-A-disaccharide synthase (400 aa).

This sequence belongs to the LpxB family.

It catalyses the reaction a lipid X + a UDP-2-N,3-O-bis[(3R)-3-hydroxyacyl]-alpha-D-glucosamine = a lipid A disaccharide + UDP + H(+). The protein operates within bacterial outer membrane biogenesis; LPS lipid A biosynthesis. Functionally, condensation of UDP-2,3-diacylglucosamine and 2,3-diacylglucosamine-1-phosphate to form lipid A disaccharide, a precursor of lipid A, a phosphorylated glycolipid that anchors the lipopolysaccharide to the outer membrane of the cell. This is Lipid-A-disaccharide synthase from Acidobacterium capsulatum (strain ATCC 51196 / DSM 11244 / BCRC 80197 / JCM 7670 / NBRC 15755 / NCIMB 13165 / 161).